The chain runs to 553 residues: Cytokine-like nuclear factor N-PAC (553 aa).

The region spanning 8 to 66 (LGDLVWGKLGRYPPWPGKIVNPPKDLKKPRGKKCFFVKFFGTEDHAWIKVEQLKPYHAH) is the PWWP domain. 2 stretches are compositionally biased toward basic and acidic residues: residues 92 to 145 (RAKG…EGKK) and 162 to 182 (RAQE…KDLT). The disordered stretch occupies residues 92 to 188 (RAKGKDQTSS…KDLTIPESST (97 aa)). Ser130 carries the post-translational modification Phosphoserine. Residue Lys135 forms a Glycyl lysine isopeptide (Lys-Gly) (interchain with G-Cter in SUMO2) linkage. A Phosphoserine modification is found at Ser167. Residues 168 to 180 (PRKRGRPPKDEKD) constitute a DNA-binding region (a.T hook). Glycyl lysine isopeptide (Lys-Gly) (interchain with G-Cter in SUMO2) cross-links involve residues Lys176, Lys179, Lys201, and Lys211. Residues 214–217 (DPHF) are interaction with histone H3. An interaction with KDM1B region spans residues 216-225 (HFHHFLLSQT). Residues Lys227, Lys237, Lys240, and Lys269 each participate in a glycyl lysine isopeptide (Lys-Gly) (interchain with G-Cter in SUMO2) cross-link. Positions 261–553 (GSITPTDKKI…MSAVYRAYIH (293 aa)) are dehydrogenase domain. Position 271-285 (271-285 (GFLGLGLMGSGIVSN)) interacts with NAD(+). Lys302 is covalently cross-linked (Glycyl lysine isopeptide (Lys-Gly) (interchain with G-Cter in SUMO2)). Residues Thr362 and Lys505 each coordinate NAD(+). Ser540 is modified (phosphoserine).

It belongs to the HIBADH-related family. NP60 subfamily. In terms of assembly, homotetramere. Interacts with MAPK14. Interacts with KDM1B at nucleosomes; this interaction stimulates H3K4me1 and H3K4me2 demethylation. Binds to mononucleosomes. Interacts with GATA4; the interaction is required for a synergistic activation of GATA4 target genes transcription.

The protein localises to the nucleus. It localises to the chromosome. In terms of biological role, cytokine-like nuclear factor with chromatin gene reader activity involved in chromatin modification and regulation of gene expression. Acts as a nucleosome-destabilizing factor that is recruited to genes during transcriptional activation. Recognizes and binds histone H3 without a preference for specific epigenetic markers and also binds DNA. Interacts with KDM1B and promotes its histone demethylase activity by facilitating the capture of H3 tails, they form a multifunctional enzyme complex that modifies transcribed chromatin and facilitates Pol II transcription through nucleosomes. Stimulates the acetylation of 'Lys-56' of nucleosomal histone H3 (H3K56ac) by EP300. With GATA4, co-binds a defined set of heart development genes and coregulates their expression during cardiomyocyte differentiation. Regulates p38 MAP kinase activity by mediating stress activation of MAPK14/p38alpha and specifically regulating MAPK14 signaling. Indirectly promotes phosphorylation of MAPK14 and activation of ATF2. The phosphorylation of MAPK14 requires upstream activity of MAP2K4 and MAP2K6. The sequence is that of Cytokine-like nuclear factor N-PAC (GLYR1) from Pongo abelii (Sumatran orangutan).